A 201-amino-acid chain; its full sequence is Small ribosomal subunit protein uS4c (201 aa).

Residues 20–44 (GLTNKKPRAGSDLRNQSRSGKKSQY) are disordered. The S4 RNA-binding domain occupies 89-150 (MRLDNILFRL…EQKSKALIQI (62 aa)).

Belongs to the universal ribosomal protein uS4 family. Part of the 30S ribosomal subunit. Contacts protein S5. The interaction surface between S4 and S5 is involved in control of translational fidelity.

The protein localises to the plastid. The protein resides in the chloroplast. Functionally, one of the primary rRNA binding proteins, it binds directly to 16S rRNA where it nucleates assembly of the body of the 30S subunit. Its function is as follows. With S5 and S12 plays an important role in translational accuracy. This Nicotiana tomentosiformis (Tobacco) protein is Small ribosomal subunit protein uS4c (rps4).